The following is a 274-amino-acid chain: Aliphatic sulfonates import ATP-binding protein SsuB 2 (274 aa).

The region spanning 21 to 235 is the ABC transporter domain; the sequence is VQLRNVVRQF…DSGQAGFQLI (215 aa). 53–60 provides a ligand contact to ATP; it reads GASGSGKT.

Belongs to the ABC transporter superfamily. Aliphatic sulfonates importer (TC 3.A.1.17.2) family. As to quaternary structure, the complex is composed of two ATP-binding proteins (SsuB), two transmembrane proteins (SsuC) and a solute-binding protein (SsuA).

Its subcellular location is the cell inner membrane. The enzyme catalyses ATP + H2O + aliphatic sulfonate-[sulfonate-binding protein]Side 1 = ADP + phosphate + aliphatic sulfonateSide 2 + [sulfonate-binding protein]Side 1.. In terms of biological role, part of the ABC transporter complex SsuABC involved in aliphatic sulfonates import. Responsible for energy coupling to the transport system. This Pseudomonas syringae pv. syringae (strain B728a) protein is Aliphatic sulfonates import ATP-binding protein SsuB 2.